Here is a 96-residue protein sequence, read N- to C-terminus: Large ribosomal subunit protein eL30 (96 aa).

The protein belongs to the eukaryotic ribosomal protein eL30 family.

In Methanosphaerula palustris (strain ATCC BAA-1556 / DSM 19958 / E1-9c), this protein is Large ribosomal subunit protein eL30.